Reading from the N-terminus, the 370-residue chain is Flagellar P-ring protein (370 aa).

A signal peptide spans 1–28; sequence MTFFTRCFRRGALLFLLAVLLLPSPAQA.

Belongs to the FlgI family. As to quaternary structure, the basal body constitutes a major portion of the flagellar organelle and consists of four rings (L,P,S, and M) mounted on a central rod.

The protein resides in the periplasm. The protein localises to the bacterial flagellum basal body. Functionally, assembles around the rod to form the L-ring and probably protects the motor/basal body from shearing forces during rotation. The polypeptide is Flagellar P-ring protein (Oleidesulfovibrio alaskensis (strain ATCC BAA-1058 / DSM 17464 / G20) (Desulfovibrio alaskensis)).